The sequence spans 132 residues: Ribonuclease VapC15 (132 aa).

In terms of domain architecture, PINc spans 1–121; that stretch reads MIVDTSVWIA…HRDRDYEAIR (121 aa). Asp-96 provides a ligand contact to Mg(2+). Residues Asp-96, Asp-114, and Asp-116 each contribute to the Mn(2+) site.

Belongs to the PINc/VapC protein family. In terms of assembly, crystallizes as a VapB15-VapC15(2) heterotrimer and as a VapB15(2)-VapC15(2) heterotetramer; each toxin pair forms a homodimer which creates a channel in which the antitoxin binds. It depends on Mg(2+) as a cofactor. Mn(2+) is required as a cofactor.

With respect to regulation, RNase activity inhibited by EDTA. Its function is as follows. Toxic component of a type II toxin-antitoxin (TA) system. Degrades total E.coli RNA, which is partially inhibited by cognate antitoxin VapB15. Upon expression in M.smegmatis inhibits colony formation, which is neutralized by coexpression with VapB15. This Mycobacterium tuberculosis (strain ATCC 25618 / H37Rv) protein is Ribonuclease VapC15.